The sequence spans 98 residues: Lipolysis-activating peptide 1-alpha chain (98 aa).

A signal peptide spans methionine 1–glycine 22. Residues proline 26–lysine 89 enclose the LCN-type CS-alpha/beta domain. Cystine bridges form between cysteine 40–cysteine 63, cysteine 49–cysteine 68, and cysteine 53–cysteine 70. Lysine 96 is modified (lysine amide).

It belongs to the long (3 C-C) scorpion toxin superfamily. In terms of assembly, monomer (edited version) and heterodimer (non-edited version) of this alpha chain and a beta chain (AC B8XGZ8). Expressed by the venom gland.

The protein localises to the secreted. In terms of biological role, the heterodimer non-edited LVP1 induces lipolysis in rat adipocytes. Induction of lipolysis by LVP1 appears to be mediated through the beta-2 adrenergic receptor pathway (ADRB2). Its function is as follows. The edited BmKBTx-like, similar to beta-toxins, may modulate voltage-gated sodium channels (Nav) and may block voltage-gated potassium channels (Kv). The protein is Lipolysis-activating peptide 1-alpha chain of Buthus israelis (Israeli scorpion).